The following is a 198-amino-acid chain: 7-methyl-GTP pyrophosphatase (198 aa).

Aspartate 75 functions as the Proton acceptor in the catalytic mechanism.

Belongs to the Maf family. YceF subfamily. It depends on a divalent metal cation as a cofactor.

It localises to the cytoplasm. The catalysed reaction is N(7)-methyl-GTP + H2O = N(7)-methyl-GMP + diphosphate + H(+). Its function is as follows. Nucleoside triphosphate pyrophosphatase that hydrolyzes 7-methyl-GTP (m(7)GTP). May have a dual role in cell division arrest and in preventing the incorporation of modified nucleotides into cellular nucleic acids. The sequence is that of 7-methyl-GTP pyrophosphatase from Nitrosospira multiformis (strain ATCC 25196 / NCIMB 11849 / C 71).